Consider the following 328-residue polypeptide: 2-oxoglutarate-dependent dioxygenase gloF (328 aa).

The 115-residue stretch at 175–289 folds into the Fe2OG dioxygenase domain; that stretch reads DTSELRMNHY…RYSVAYFGKP (115 aa). Fe cation contacts are provided by H201, D203, and H261. R280 provides a ligand contact to 2-oxoglutarate.

The protein belongs to the iron/ascorbate-dependent oxidoreductase family. The cofactor is Fe(2+).

It participates in mycotoxin biosynthesis. Its function is as follows. 2-oxoglutarate-dependent dioxygenase; part of the gene cluster that mediates the biosynthesis of pneumocandins, lipohexapeptides of the echinocandin family that prevent fungal cell wall formation by non-competitive inhibition of beta-1,3-glucan synthase. The 10,12-dimethylmyristoyl side chain is synthesized by the reducing polyketide synthase gloL/GLPKS4. The thioesterase gloN/GLHYD exclusively interacts with gloL/GLPKS4 to maintain turnover of the polyketide side chain. The 10R,12S-dimethylmyristic acid is then transferred to the first thiolation domain of the nonribosomal peptide synthetase gloA/GLNRPS4 by the acyl-AMP ligase gloD/GLligase, followed by its acylation to L-ornithine to trigger elongation of the cyclic hexapeptide. L-ornithine, 4R-hydroxyl-L-proline (generated from L-proline by the dioxygenase gloF/GLOXY2), 3S-hydroxyl-L-homotyrosine (generated by gloG/GLHtyB, gloH/GLHtyA, gloI/GLHtyC, gloJ/GLHtyD and hydroxylated at C-3 by the dioxygenase gloM/GLOXY1), 3R-hydroxyl-L-glutamine (generated from L-glutamine probably by the dioxygenase gloE/GLOXY3) and 3S-hydroxyl-L-proline (generated from L-proline by the dioxygenase gloF/GLOXY2 to yield pneumocandin B0), or 3S-hydroxyl-4S-methyl-L-proline (generated from L-leucine by the dioxygenase gloC/GLOXY4 to yield pneumocandin A0) are sequentially added to the growing chain. The last C domain of gloA/GLNRPS4 is proposed to be responsible for cyclization by condensation to form the peptide bond between L-ornithine and 3S-hydroxyl-4S-methyl-L-proline (for pneumocandin A0) or 3S-hydroxyl-L-proline (for pneumocandin B0). Finally, the subsequent C-4 hydroxylation of 3S-hydroxyl-L-homotyrosine and L-ornithine dihydroxylation at C-4 and C-5 are performed by the cytochrome P450 monooxygenases gloP/GLP450-1 and gloO/GLP450-2, respectively. The sequence is that of 2-oxoglutarate-dependent dioxygenase gloF from Glarea lozoyensis (strain ATCC 20868 / MF5171).